A 93-amino-acid chain; its full sequence is uncharacterized protein (93 aa).

Transmembrane regions (helical) follow at residues 8–28 (FIGI…LLAS) and 54–74 (ACFL…YLIL).

It is found in the cell membrane. This is an uncharacterized protein from Methanocaldococcus jannaschii (strain ATCC 43067 / DSM 2661 / JAL-1 / JCM 10045 / NBRC 100440) (Methanococcus jannaschii).